A 1059-amino-acid chain; its full sequence is Zinc finger protein 865 (1059 aa).

3 disordered regions span residues 1–24 (MEANPAGSGAGGGGSSGIGGEDGV), 58–142 (LPCA…DAAF), and 161–206 (NLKR…CDPT). A compositionally biased stretch (gly residues) spans 8–21 (SGAGGGGSSGIGGE). Pro residues predominate over residues 61 to 78 (APGPPPQPPPQPPPPQYD). Positions 93 to 119 (SSSSSSSSSSSSSSSSSSSSSSSSSQA) are enriched in low complexity. Pro residues-rich tracts occupy residues 124-137 (PPLPPAFGAPPPPL) and 183-198 (APGPLPAPSQTPPGPP). C2H2-type zinc fingers lie at residues 224–246 (FPCGVCQKSFKQSSHLVQHMLVH) and 252–274 (YECGVCGRTYNHVSSLIRHRRCH). The interval 275 to 342 (KDVPPAAGGP…PAGVGVPPPA (68 aa)) is disordered. Positions 281 to 296 (AGGPPQPGPHLPPLGL) are enriched in pro residues. 2 stretches are compositionally biased toward low complexity: residues 297 to 316 (PAPAASAATAAAPSTVSSGP) and 324 to 337 (APSADGSAAPAGVG). C2H2-type zinc fingers lie at residues 350 to 372 (FACPLCWKVFKKPSHLHQHQIIH), 378 to 400 (FSCSVCSKSFNRRESLKRHVKTH), 407 to 429 (LPCGICGKAFRDASYLLKHQAAH), and 441 to 463 (YPCDLCGKSYSAPQSLLRHKAAH). A disordered region spans residues 461–503 (AAHAPPAAAAEAPKDGAASAPQPPPTFPPGPYLLPPDPPTTDS). Over residues 463 to 480 (HAPPAAAAEAPKDGAASA) the composition is skewed to low complexity. A compositionally biased stretch (pro residues) spans 481–499 (PQPPPTFPPGPYLLPPDPP). 5 C2H2-type zinc fingers span residues 550–572 (FCCGICGRGFGRRETLKRHERIH), 578–600 (HQCPVCGKRFRESFHLSKHHVVH), 606–628 (YKCELCGKVFGYPQSLTRHRQVH), 669–691 (YACSDCGEHFPDLFHVMSHKEVH), and 697–719 (YGCDACGKTFGFIENLMWHKLVH). The interval 726–747 (LLPPAPGGLQPPDGSSGTDAAS) is disordered. 9 C2H2-type zinc fingers span residues 792-814 (FSCATCGQSFKHFLGLVTHKYVH), 820-842 (LGCGLCGQSFAGAYDLLLHRRSH), 848-870 (FRCPVCGKRFWEAALLMRHQRCH), 876-898 (YRCGVCGRGFLRSWYLRQHRVVH), 904-926 (FKCGVCAKRFAQSSSLAEHRRLH), 932-954 (QRCSACGKTFRYRSNLLEHQRLH), 960-982 (YRCEHCGKGFFYLSSVLRHQRAH), 989-1011 (LRCPACLKAFKDPGYFRKHLAAH), and 1017-1039 (FRCSSCGEGFANTYGLKKHRLAH). Lys-802 participates in a covalent cross-link: Glycyl lysine isopeptide (Lys-Gly) (interchain with G-Cter in SUMO2). Lys-1040 participates in a covalent cross-link: Glycyl lysine isopeptide (Lys-Gly) (interchain with G-Cter in SUMO2).

This sequence belongs to the krueppel C2H2-type zinc-finger protein family.

Its subcellular location is the nucleus. May be involved in transcriptional regulation. This is Zinc finger protein 865 (ZNF865) from Homo sapiens (Human).